The chain runs to 258 residues: Thiazole synthase (258 aa).

The active-site Schiff-base intermediate with DXP is K100. 1-deoxy-D-xylulose 5-phosphate contacts are provided by residues G161, 187 to 188, and 209 to 210; these read AG and NT.

Belongs to the ThiG family. In terms of assembly, homotetramer. Forms heterodimers with either ThiH or ThiS.

It is found in the cytoplasm. It catalyses the reaction [ThiS sulfur-carrier protein]-C-terminal-Gly-aminoethanethioate + 2-iminoacetate + 1-deoxy-D-xylulose 5-phosphate = [ThiS sulfur-carrier protein]-C-terminal Gly-Gly + 2-[(2R,5Z)-2-carboxy-4-methylthiazol-5(2H)-ylidene]ethyl phosphate + 2 H2O + H(+). The protein operates within cofactor biosynthesis; thiamine diphosphate biosynthesis. Functionally, catalyzes the rearrangement of 1-deoxy-D-xylulose 5-phosphate (DXP) to produce the thiazole phosphate moiety of thiamine. Sulfur is provided by the thiocarboxylate moiety of the carrier protein ThiS. In vitro, sulfur can be provided by H(2)S. This chain is Thiazole synthase, found in Campylobacter jejuni subsp. jejuni serotype O:6 (strain 81116 / NCTC 11828).